A 513-amino-acid polypeptide reads, in one-letter code: ATP synthase subunit alpha (513 aa).

169–176 is an ATP binding site; that stretch reads GDRQTGKT.

Belongs to the ATPase alpha/beta chains family. F-type ATPases have 2 components, CF(1) - the catalytic core - and CF(0) - the membrane proton channel. CF(1) has five subunits: alpha(3), beta(3), gamma(1), delta(1), epsilon(1). CF(0) has three main subunits: a(1), b(2) and c(9-12). The alpha and beta chains form an alternating ring which encloses part of the gamma chain. CF(1) is attached to CF(0) by a central stalk formed by the gamma and epsilon chains, while a peripheral stalk is formed by the delta and b chains.

It localises to the cell inner membrane. It catalyses the reaction ATP + H2O + 4 H(+)(in) = ADP + phosphate + 5 H(+)(out). Produces ATP from ADP in the presence of a proton gradient across the membrane. The alpha chain is a regulatory subunit. This chain is ATP synthase subunit alpha, found in Shewanella putrefaciens (strain CN-32 / ATCC BAA-453).